We begin with the raw amino-acid sequence, 367 residues long: 3-dehydroquinate synthase (367 aa).

NAD(+) is bound by residues 72-77 (DGENYK), 106-110 (GVIGD), 130-131 (TT), K143, K152, and 170-173 (FLST). Residues E185, H248, and H265 each coordinate Zn(2+).

This sequence belongs to the sugar phosphate cyclases superfamily. Dehydroquinate synthase family. The cofactor is Co(2+). Zn(2+) serves as cofactor. It depends on NAD(+) as a cofactor.

Its subcellular location is the cytoplasm. The catalysed reaction is 7-phospho-2-dehydro-3-deoxy-D-arabino-heptonate = 3-dehydroquinate + phosphate. Its pathway is metabolic intermediate biosynthesis; chorismate biosynthesis; chorismate from D-erythrose 4-phosphate and phosphoenolpyruvate: step 2/7. Catalyzes the conversion of 3-deoxy-D-arabino-heptulosonate 7-phosphate (DAHP) to dehydroquinate (DHQ). This chain is 3-dehydroquinate synthase, found in Buchnera aphidicola subsp. Cinara cedri (strain Cc).